The sequence spans 118 residues: Large ribosomal subunit protein uL22 (118 aa).

This sequence belongs to the universal ribosomal protein uL22 family. As to quaternary structure, part of the 50S ribosomal subunit.

Its function is as follows. This protein binds specifically to 23S rRNA; its binding is stimulated by other ribosomal proteins, e.g. L4, L17, and L20. It is important during the early stages of 50S assembly. It makes multiple contacts with different domains of the 23S rRNA in the assembled 50S subunit and ribosome. In terms of biological role, the globular domain of the protein is located near the polypeptide exit tunnel on the outside of the subunit, while an extended beta-hairpin is found that lines the wall of the exit tunnel in the center of the 70S ribosome. The polypeptide is Large ribosomal subunit protein uL22 (Pediococcus pentosaceus (strain ATCC 25745 / CCUG 21536 / LMG 10740 / 183-1w)).